A 302-amino-acid polypeptide reads, in one-letter code: Putative cyclin-D6-1 (302 aa).

It belongs to the cyclin family. Cyclin D subfamily.

The polypeptide is Putative cyclin-D6-1 (CYCD6-1) (Arabidopsis thaliana (Mouse-ear cress)).